The chain runs to 411 residues: LL-diaminopimelate aminotransferase (411 aa).

Tyr15 and Gly42 together coordinate substrate. Pyridoxal 5'-phosphate is bound by residues Tyr72, 108–109 (SK), Tyr132, Asn187, Tyr218, and 246–248 (SFS). Positions 109, 132, and 187 each coordinate substrate. The residue at position 249 (Lys249) is an N6-(pyridoxal phosphate)lysine. The pyridoxal 5'-phosphate site is built by Arg257 and Asn292. Residues Asn292 and Arg388 each coordinate substrate.

This sequence belongs to the class-I pyridoxal-phosphate-dependent aminotransferase family. LL-diaminopimelate aminotransferase subfamily. As to quaternary structure, homodimer. It depends on pyridoxal 5'-phosphate as a cofactor.

It carries out the reaction (2S,6S)-2,6-diaminopimelate + 2-oxoglutarate = (S)-2,3,4,5-tetrahydrodipicolinate + L-glutamate + H2O + H(+). Its pathway is amino-acid biosynthesis; L-lysine biosynthesis via DAP pathway; LL-2,6-diaminopimelate from (S)-tetrahydrodipicolinate (aminotransferase route): step 1/1. Its function is as follows. Involved in the synthesis of meso-diaminopimelate (m-DAP or DL-DAP), required for both lysine and peptidoglycan biosynthesis. Catalyzes the direct conversion of tetrahydrodipicolinate to LL-diaminopimelate. This is LL-diaminopimelate aminotransferase from Synechococcus sp. (strain JA-3-3Ab) (Cyanobacteria bacterium Yellowstone A-Prime).